A 118-amino-acid chain; its full sequence is Large ribosomal subunit protein uL22 (118 aa).

The protein belongs to the universal ribosomal protein uL22 family. Part of the 50S ribosomal subunit.

Functionally, this protein binds specifically to 23S rRNA; its binding is stimulated by other ribosomal proteins, e.g. L4, L17, and L20. It is important during the early stages of 50S assembly. It makes multiple contacts with different domains of the 23S rRNA in the assembled 50S subunit and ribosome. Its function is as follows. The globular domain of the protein is located near the polypeptide exit tunnel on the outside of the subunit, while an extended beta-hairpin is found that lines the wall of the exit tunnel in the center of the 70S ribosome. The sequence is that of Large ribosomal subunit protein uL22 from Synechococcus sp. (strain RCC307).